The chain runs to 674 residues: DNA ligase (674 aa).

Residues Asp-42–Asp-46, Ser-91–Met-92, and Glu-121 each bind NAD(+). The N6-AMP-lysine intermediate role is filled by Lys-123. Arg-144, Glu-178, Lys-294, and Lys-318 together coordinate NAD(+). Residues Cys-412, Cys-415, Cys-430, and Cys-435 each contribute to the Zn(2+) site. The BRCT domain maps to Val-596–Asp-674.

Belongs to the NAD-dependent DNA ligase family. LigA subfamily. Mg(2+) serves as cofactor. Requires Mn(2+) as cofactor.

The catalysed reaction is NAD(+) + (deoxyribonucleotide)n-3'-hydroxyl + 5'-phospho-(deoxyribonucleotide)m = (deoxyribonucleotide)n+m + AMP + beta-nicotinamide D-nucleotide.. Functionally, DNA ligase that catalyzes the formation of phosphodiester linkages between 5'-phosphoryl and 3'-hydroxyl groups in double-stranded DNA using NAD as a coenzyme and as the energy source for the reaction. It is essential for DNA replication and repair of damaged DNA. This Lacticaseibacillus casei (strain BL23) (Lactobacillus casei) protein is DNA ligase.